Reading from the N-terminus, the 1113-residue chain is Nucleoporin NUP116/NSP116 (1113 aa).

The disordered stretch occupies residues 1–35; the sequence is MFGVSRGAFPSATTQPFGSTGSTFGGQQQQQQPVA. FG repeat units follow at residues 2 to 3, 17 to 18, 24 to 25, and 40 to 41; these read FG. A compositionally biased stretch (low complexity) spans 13–33; the sequence is TTQPFGSTGSTFGGQQQQQQP. A disordered region spans residues 49 to 91; the sequence is TQAPAFGNFGNQTSNSPFGMSGSTTANGTPFGQSQLTNNNASG. Residues 55–58 form a GLFG 1; approximate repeat; it reads GNFG. FG repeat units follow at residues 66–67, 79–80, and 94–95; these read FG. Residues 92–172 are interaction with AFG2; the sequence is SIFGGMGNNT…AGRKFGTSQN (81 aa). The GLE2 binding sequence (GLEBS) stretch occupies residues 110 to 166; it reads VVPNSTAGTSIKPFTTFEEKDPTTGVINVFQSITCMPEYRNFSFEELRFQDYQAGRK. The segment at 160–362 is interaction with MEX67, not KAP95; it reads DYQAGRKFGT…AKPASGGLFG (203 aa). FG repeat units follow at residues 167 to 168 and 189 to 190; these read FG. One copy of the GLFG 2 repeat lies at 205 to 208; that stretch reads GLFG. The stretch at 214–217 is one GLFG 3; approximate repeat; it reads GMFG. A GLFG 4; approximate repeat occupies 224–227; the sequence is GGFG. The GLFG 5 repeat unit spans residues 235-238; sequence GLFG. The FG 10 repeat unit spans residues 249-250; that stretch reads FG. 3 GLFG repeats span residues 259–262, 276–279, and 288–291; these read GLFG. The span at 265–279 shows a compositional bias: low complexity; it reads TNNPTNGTNNTGLFG. The interval 265–341 is disordered; that stretch reads TNNPTNGTNN…SNANANGGAF (77 aa). Residues 280 to 304 are compositionally biased toward polar residues; that stretch reads QQNSNTNGGLFGQQQNSFGANNVSN. One copy of the FG 11 repeat lies at 297-298; the sequence is FG. Residues 306–309 form a GLFG 9; approximate repeat; it reads GAFG. One copy of the GLFG 10; approximate repeat lies at 327–330; sequence GIFG. Residues 330-341 are compositionally biased toward low complexity; it reads GQSNANANGGAF. Residues 339 to 342 form a GLFG 11; approximate repeat; the sequence is GAFG. An FG 12 repeat occupies 351 to 352; it reads FG. A GLFG 12 repeat occupies 359-362; sequence GLFG. The sufficient for interaction with MEX67 and KAP95 stretch occupies residues 362 to 535; sequence GQSAGSKAFG…GAKPTGFGNT (174 aa). The FG 13 repeat unit spans residues 370-371; that stretch reads FG. A disordered region spans residues 371 to 606; sequence GMNTNPTGTT…NPASTSGGLF (236 aa). 4 GLFG repeats span residues 382–385, 395–398, 407–410, and 420–423; these read GLFG. The segment covering 410–438 has biased composition (low complexity); it reads GQNNQSQNQSGLFGQQNSSNAFGQPQQQG. The FG 14 repeat unit spans residues 431–432; that stretch reads FG. 2 GLFG repeats span residues 439-442 and 448-451; these read GLFG. Residues 451–464 are compositionally biased toward polar residues; the sequence is GQQQGASTFASGNA. Composition is skewed to low complexity over residues 465-478 and 485-522; these read QNNS…QQQQ and GQQN…QQNN. Residues 470–471 form an FG 15 repeat; it reads FG. GLFG repeat units lie at residues 482 to 485 and 497 to 500; these read GLFG. FG repeat units follow at residues 510–511, 525–526, and 532–533; these read FG. Residues 532-569 show a composition bias toward polar residues; the sequence is FGNTSLFSNSTTNQSNGISGNNLQQQSGGLFQNKQQPA. Residues 536 to 732 form an interaction with KAP95, not MEX67 region; the sequence is SLFSNSTTNQ…QSQNALQQQQ (197 aa). 3 GLFG repeats span residues 572–575, 585–588, and 604–607; these read GLFG. Residues 588 to 603 are compositionally biased toward polar residues; it reads GNNQVANQNNPASTSG. An FG 19 repeat occupies 616 to 617; it reads FG. Residues 630-633 form a GLFG 24; approximate repeat; sequence GIFG. 3 GLFG repeats span residues 648-651, 665-668, and 683-686; these read GLFG. The segment covering 678–691 has biased composition (low complexity); sequence SNGSTGLFGSNNTS. 2 disordered regions span residues 678–736 and 868–939; these read SNGS…QQQR and SEEK…ENVA. Polar residues predominate over residues 692–708; the sequence is QSTNAGGLFQNNTSTNT. The span at 719-736 shows a compositional bias: low complexity; the sequence is QSMAQSQNALQQQQQQQR. Serine 886 carries the phosphoserine modification. A compositionally biased stretch (basic and acidic residues) spans 916-939; sequence NDGEDSATKHHSRNMDEENKENVA. The 143-residue stretch at 967-1109 folds into the Peptidase S59 domain; the sequence is NENYYISPSL…GTYVFIVNHA (143 aa). The segment at 967–1113 is interaction with NUP82 NPC subcomplex; the sequence is NENYYISPSL…FIVNHAAEQT (147 aa). A nucleoporin RNA-binding motif (NRM) region spans residues 969 to 1108; sequence NYYISPSLDT…SGTYVFIVNH (140 aa).

It belongs to the nucleoporin GLFG family. Component of the nuclear pore complex (NPC). NPC constitutes the exclusive means of nucleocytoplasmic transport. NPCs allow the passive diffusion of ions and small molecules and the active, nuclear transport receptor-mediated bidirectional transport of macromolecules such as proteins, RNAs, ribonucleoparticles (RNPs), and ribosomal subunits across the nuclear envelope. Due to its 8-fold rotational symmetry, all subunits are present with 8 copies or multiples thereof. NUP116 interacts with the NUP82 subcomplex and GLE2. Through its FG repeats it interacts with numerous karyopherins including KAP95, PSE1 (GSP1-GDP dependent), MEX67, and to homomeric RNA. Interacts with CEX1. Interacts (via N-terminus) with AFG2 (via N-terminus).

The protein resides in the nucleus. The protein localises to the nuclear pore complex. Its subcellular location is the nucleus membrane. Functions as a component of the nuclear pore complex (NPC). NPC components, collectively referred to as nucleoporins (NUPs), can play the role of both NPC structural components and of docking or interaction partners for transiently associated nuclear transport factors. Active directional transport is assured by both, a Phe-Gly (FG) repeat affinity gradient for these transport factors across the NPC and a transport cofactor concentration gradient across the nuclear envelope (GSP1 and GSP2 GTPases associated predominantly with GTP in the nucleus, with GDP in the cytoplasm). Plays an important role in several nuclear export and import pathways including poly(A)+ RNA, tRNA, pre-ribosome, and protein transport. By binding ATPase AFG2, promotes AFG2-mediated release of shuttling protein RLP24 from pre-60S ribosomal particles. This chain is Nucleoporin NUP116/NSP116 (NUP116), found in Saccharomyces cerevisiae (strain ATCC 204508 / S288c) (Baker's yeast).